A 185-amino-acid chain; its full sequence is MDNLQQVVSALQSGEVIAYPTEGVFGVGCDPDNPQAVEKLLALKQRPIEKGLILIAANYQQLQPYIDDAQLSDLQKQKIFSTWPGPVTWVMPVKKDISPLLTGKFTSIAVRVSDHPLVQKLCHQFGKPITSTSANLTGLPPCKTVTEVQNQLGEHLSAILEGETGGRENPTEIRDAFSDTVLRQG.

One can recognise a YrdC-like domain in the interval 1–185; that stretch reads MDNLQQVVSA…AFSDTVLRQG (185 aa).

The protein belongs to the SUA5 family. TsaC subfamily.

The protein resides in the cytoplasm. It carries out the reaction L-threonine + hydrogencarbonate + ATP = L-threonylcarbamoyladenylate + diphosphate + H2O. Required for the formation of a threonylcarbamoyl group on adenosine at position 37 (t(6)A37) in tRNAs that read codons beginning with adenine. Catalyzes the conversion of L-threonine, HCO(3)(-)/CO(2) and ATP to give threonylcarbamoyl-AMP (TC-AMP) as the acyladenylate intermediate, with the release of diphosphate. This chain is Threonylcarbamoyl-AMP synthase, found in Photobacterium profundum (strain SS9).